Here is a 418-residue protein sequence, read N- to C-terminus: UPF0261 protein BMEII0128 (418 aa).

It belongs to the UPF0261 family.

The sequence is that of UPF0261 protein BMEII0128 from Brucella melitensis biotype 1 (strain ATCC 23456 / CCUG 17765 / NCTC 10094 / 16M).